The primary structure comprises 189 residues: uncharacterized protein (189 aa).

5 helical membrane passes run 4 to 21 (AIST…FLFR), 34 to 56 (AFYP…PLIL), 79 to 101 (LLVI…LIYS), 122 to 144 (RILS…VLLN), and 148 to 170 (ILHV…NLLV).

The protein localises to the cell membrane. This is an uncharacterized protein from Archaeoglobus fulgidus (strain ATCC 49558 / DSM 4304 / JCM 9628 / NBRC 100126 / VC-16).